A 397-amino-acid polypeptide reads, in one-letter code: P2X purinoceptor 3 (397 aa).

The Cytoplasmic segment spans residues 1–20; it reads MNCISDFFTYETTKSVVVKS. Residues 21 to 43 form a helical membrane-spanning segment; sequence WTIGIINRAVQLLIISYFVGWVF. At 44 to 322 the chain is on the extracellular side; the sequence is LHEKAYQVRD…AGKFNIIPTI (279 aa). Residues Lys-63 and Lys-65 each contribute to the ATP site. Cystine bridges form between Cys-107-Cys-153, Cys-116-Cys-137, and Cys-122-Cys-147. Residue Glu-111 participates in Mg(2+) binding. The N-linked (GlcNAc...) asparagine glycan is linked to Asn-139. Residue Asp-158 coordinates Mg(2+). Asp-158 is a binding site for Ca(2+). Asn-170 carries an N-linked (GlcNAc...) asparagine glycan. Thr-172 provides a ligand contact to ATP. An N-linked (GlcNAc...) asparagine glycan is attached at Asn-194. 2 disulfide bridges follow: Cys-203/Cys-213 and Cys-247/Cys-256. Residues Ser-275, Asn-279, and Arg-281 each contribute to the ATP site. The N-linked (GlcNAc...) asparagine glycan is linked to Asn-290. Lys-299 contributes to the ATP binding site. The helical transmembrane segment at 323–341 threads the bilayer; sequence ISSVAAFTSVGVGTVLCDI. Topologically, residues 342–397 are cytoplasmic; that stretch reads ILLNFLKGADHYKARKFEEVTETTLKGTASTNPVFTSDQATVEKQSTDSGAYSIGH.

This sequence belongs to the P2X receptor family. In terms of assembly, homotrimer. Forms heterotrimer with P2RX2. Heterotrimeric P2RX2/3 has a ligand dose-response profile that is distinct from either homotrimeric P2RX2 or P2RX3.

Its subcellular location is the cell membrane. The enzyme catalyses Ca(2+)(in) = Ca(2+)(out). It catalyses the reaction Na(+)(in) = Na(+)(out). Has high sensitivity to ATP. Fast activation by external ATP. Exhibits rapid desensitization. Sensitives to the ATP agonist:alpha/beta-methylene-ATP. Subject to allosteric inhibition by AF-219. Mg(2+) and Ca(2+) slow deactivation of P2RX3. In terms of biological role, extracellular ATP-activated non-selective cation channel. Plays particularly important role in sensory neurons where its activation is critical for gustatory, nociceptive responses, visceral reflexes and sensory hypersensitization. The protein is P2X purinoceptor 3 (P2rx3) of Mus musculus (Mouse).